Reading from the N-terminus, the 448-residue chain is Tubulin beta-1 chain (448 aa).

GTP contacts are provided by Gln11, Glu69, Ser138, Gly142, Thr143, Gly144, Asn204, and Asn226. Mg(2+) is bound at residue Glu69. A disordered region spans residues 428–448 (AGIGDDEEEDEEGVMGEEIDA). The segment covering 430–448 (IGDDEEEDEEGVMGEEIDA) has biased composition (acidic residues).

Belongs to the tubulin family. In terms of assembly, dimer of alpha and beta chains. A typical microtubule is a hollow water-filled tube with an outer diameter of 25 nm and an inner diameter of 15 nM. Alpha-beta heterodimers associate head-to-tail to form protofilaments running lengthwise along the microtubule wall with the beta-tubulin subunit facing the microtubule plus end conferring a structural polarity. Microtubules usually have 13 protofilaments but different protofilament numbers can be found in some organisms and specialized cells. Requires Mg(2+) as cofactor.

It localises to the cytoplasm. The protein localises to the cytoskeleton. Its function is as follows. Tubulin is the major constituent of microtubules, a cylinder consisting of laterally associated linear protofilaments composed of alpha- and beta-tubulin heterodimers. Microtubules grow by the addition of GTP-tubulin dimers to the microtubule end, where a stabilizing cap forms. Below the cap, tubulin dimers are in GDP-bound state, owing to GTPase activity of alpha-tubulin. In Echinococcus multilocularis (Fox tapeworm), this protein is Tubulin beta-1 chain (TUB-1).